Reading from the N-terminus, the 422-residue chain is Gamma-glutamyl phosphate reductase (422 aa).

This sequence belongs to the gamma-glutamyl phosphate reductase family.

The protein localises to the cytoplasm. It carries out the reaction L-glutamate 5-semialdehyde + phosphate + NADP(+) = L-glutamyl 5-phosphate + NADPH + H(+). The protein operates within amino-acid biosynthesis; L-proline biosynthesis; L-glutamate 5-semialdehyde from L-glutamate: step 2/2. Its function is as follows. Catalyzes the NADPH-dependent reduction of L-glutamate 5-phosphate into L-glutamate 5-semialdehyde and phosphate. The product spontaneously undergoes cyclization to form 1-pyrroline-5-carboxylate. The protein is Gamma-glutamyl phosphate reductase of Nitrosomonas eutropha (strain DSM 101675 / C91 / Nm57).